The sequence spans 374 residues: Probable dual-specificity RNA methyltransferase RlmN (374 aa).

Glu108 serves as the catalytic Proton acceptor. One can recognise a Radical SAM core domain in the interval Tyr114–Arg361. Cysteines 121 and 367 form a disulfide. Residues Cys128, Cys132, and Cys135 each contribute to the [4Fe-4S] cluster site. Residues Gly188–Glu189, Ser222, Ser245–His247, and Asn324 each bind S-adenosyl-L-methionine. Cys367 acts as the S-methylcysteine intermediate in catalysis.

Belongs to the radical SAM superfamily. RlmN family. It depends on [4Fe-4S] cluster as a cofactor.

It is found in the cytoplasm. It carries out the reaction adenosine(2503) in 23S rRNA + 2 reduced [2Fe-2S]-[ferredoxin] + 2 S-adenosyl-L-methionine = 2-methyladenosine(2503) in 23S rRNA + 5'-deoxyadenosine + L-methionine + 2 oxidized [2Fe-2S]-[ferredoxin] + S-adenosyl-L-homocysteine. It catalyses the reaction adenosine(37) in tRNA + 2 reduced [2Fe-2S]-[ferredoxin] + 2 S-adenosyl-L-methionine = 2-methyladenosine(37) in tRNA + 5'-deoxyadenosine + L-methionine + 2 oxidized [2Fe-2S]-[ferredoxin] + S-adenosyl-L-homocysteine. Functionally, specifically methylates position 2 of adenine 2503 in 23S rRNA and position 2 of adenine 37 in tRNAs. This chain is Probable dual-specificity RNA methyltransferase RlmN, found in Mycobacterium sp. (strain JLS).